The following is a 93-amino-acid chain: Small ribosomal subunit protein uS19 (93 aa).

It belongs to the universal ribosomal protein uS19 family.

In terms of biological role, protein S19 forms a complex with S13 that binds strongly to the 16S ribosomal RNA. The chain is Small ribosomal subunit protein uS19 from Maridesulfovibrio salexigens (strain ATCC 14822 / DSM 2638 / NCIMB 8403 / VKM B-1763) (Desulfovibrio salexigens).